We begin with the raw amino-acid sequence, 184 residues long: Photosystem I assembly protein Ycf4 (184 aa).

2 helical membrane passes run 20-42 (VNLCWACILVCGATGFLLVGFSS) and 57-79 (IAFIPQGLVMCFYGIAGLFLGLY).

The protein belongs to the Ycf4 family.

The protein resides in the plastid. It is found in the chloroplast thylakoid membrane. Its function is as follows. Seems to be required for the assembly of the photosystem I complex. This chain is Photosystem I assembly protein Ycf4, found in Adiantum capillus-veneris (Maidenhair fern).